The primary structure comprises 111 residues: ATP-dependent Clp protease adapter protein ClpS (111 aa).

Belongs to the ClpS family. Binds to the N-terminal domain of the chaperone ClpA.

Functionally, involved in the modulation of the specificity of the ClpAP-mediated ATP-dependent protein degradation. This chain is ATP-dependent Clp protease adapter protein ClpS, found in Legionella pneumophila (strain Paris).